Here is a 315-residue protein sequence, read N- to C-terminus: Olfactory receptor 4A8 (315 aa).

Over Met-1 to Ala-24 the chain is Extracellular. An N-linked (GlcNAc...) asparagine glycan is attached at Asn-6. The helical transmembrane segment at Leu-25 to Val-45 threads the bilayer. At Ser-46–Val-57 the chain is on the cytoplasmic side. Residues Tyr-58–Ile-80 form a helical membrane-spanning segment. Topologically, residues Val-81–Cys-95 are extracellular. A disulfide bridge links Cys-95 with Cys-177. A helical membrane pass occupies residues Met-96–Met-116. At Ala-117–Cys-139 the chain is on the cytoplasmic side. Residues Ile-140–Val-160 traverse the membrane as a helical segment. Topologically, residues Val-161–Val-193 are extracellular. The chain crosses the membrane as a helical span at residues Gly-194–Ile-214. Over Ser-215 to Pro-235 the chain is Cytoplasmic. The helical transmembrane segment at Phe-236–Tyr-256 threads the bilayer. Residues Val-257–Asp-266 are Extracellular-facing. A helical membrane pass occupies residues Lys-267–Leu-287. At Arg-288–Asn-315 the chain is on the cytoplasmic side.

It belongs to the G-protein coupled receptor 1 family.

Its subcellular location is the cell membrane. Functionally, odorant receptor. In Homo sapiens (Human), this protein is Olfactory receptor 4A8 (OR4A8).